A 682-amino-acid chain; its full sequence is Potassium-transporting ATPase ATP-binding subunit (682 aa).

Transmembrane regions (helical) follow at residues Pro-34–Val-54, Ile-58–Phe-78, Ile-219–Leu-239, and Val-254–Ile-274. The active-site 4-aspartylphosphate intermediate is Asp-307. ATP-binding positions include Asp-344, Glu-348, Phe-377–Ser-384, and Lys-395. The Mg(2+) site is built by Asp-518 and Asp-522. The next 3 helical transmembrane spans lie at Phe-588–Met-608, Ala-616–Leu-636, and Leu-662–Ala-682.

Belongs to the cation transport ATPase (P-type) (TC 3.A.3) family. Type IA subfamily. The system is composed of three essential subunits: KdpA, KdpB and KdpC.

The protein resides in the cell inner membrane. It carries out the reaction K(+)(out) + ATP + H2O = K(+)(in) + ADP + phosphate + H(+). Functionally, part of the high-affinity ATP-driven potassium transport (or Kdp) system, which catalyzes the hydrolysis of ATP coupled with the electrogenic transport of potassium into the cytoplasm. This subunit is responsible for energy coupling to the transport system and for the release of the potassium ions to the cytoplasm. The chain is Potassium-transporting ATPase ATP-binding subunit from Salmonella enteritidis PT4 (strain P125109).